The primary structure comprises 240 residues: Large ribosomal subunit protein uL2 (240 aa).

Positions 200–240 (HPFGGGGRQHPGKPKSISRNAPPGRKVGDIASKRTGRGGNE) are disordered.

This sequence belongs to the universal ribosomal protein uL2 family. Part of the 50S ribosomal subunit. Forms a bridge to the 30S subunit in the 70S ribosome. Interacts weakly with protein L37Ae.

In terms of biological role, one of the primary rRNA binding proteins. Required for association of the 30S and 50S subunits to form the 70S ribosome, for tRNA binding and peptide bond formation. It has been suggested to have peptidyltransferase activity; this is somewhat controversial. Makes several contacts with the 16S rRNA in the 70S ribosome. This chain is Large ribosomal subunit protein uL2 (rpl2), found in Haloarcula marismortui (strain ATCC 43049 / DSM 3752 / JCM 8966 / VKM B-1809) (Halobacterium marismortui).